The following is a 180-amino-acid chain: Translation initiation factor IF-3 (180 aa).

The protein belongs to the IF-3 family. As to quaternary structure, monomer.

The protein localises to the cytoplasm. Functionally, IF-3 binds to the 30S ribosomal subunit and shifts the equilibrium between 70S ribosomes and their 50S and 30S subunits in favor of the free subunits, thus enhancing the availability of 30S subunits on which protein synthesis initiation begins. This is Translation initiation factor IF-3 from Klebsiella pneumoniae.